The primary structure comprises 448 residues: Phosphoglucosamine mutase (448 aa).

Residue serine 100 is the Phosphoserine intermediate of the active site. 4 residues coordinate Mg(2+): serine 100, aspartate 240, aspartate 242, and aspartate 244. Position 100 is a phosphoserine (serine 100).

This sequence belongs to the phosphohexose mutase family. It depends on Mg(2+) as a cofactor. In terms of processing, activated by phosphorylation.

The enzyme catalyses alpha-D-glucosamine 1-phosphate = D-glucosamine 6-phosphate. Its function is as follows. Catalyzes the conversion of glucosamine-6-phosphate to glucosamine-1-phosphate. The chain is Phosphoglucosamine mutase from Bacillus licheniformis (strain ATCC 14580 / DSM 13 / JCM 2505 / CCUG 7422 / NBRC 12200 / NCIMB 9375 / NCTC 10341 / NRRL NRS-1264 / Gibson 46).